Here is a 204-residue protein sequence, read N- to C-terminus: CASP-like protein 4B4 (204 aa).

The Cytoplasmic segment spans residues 1 to 60; the sequence is MSAAVAASSGAPAADVEKGAAAADANVDGGGAPAAAAASGEGVVSAVVRRWRRQDLLEKS. A helical transmembrane segment spans residues 61–81; sequence GSALRVAAWAFSLLAFVVMGA. The Extracellular segment spans residues 82-98; sequence NDHGDWRQFEHYEEYRY. The helical transmembrane segment at 99 to 119 threads the bilayer; it reads VVAIGVLAFIYTTLQLVRHGV. Topologically, residues 120–130 are cytoplasmic; it reads RLTGGQDLQGK. Residues 131-151 traverse the membrane as a helical segment; that stretch reads VAVLVDFAGDQVTAYLLMSAV. Residues 152 to 175 lie on the Extracellular side of the membrane; the sequence is SAAIPITNRMREGADNVFTDSSAA. The chain crosses the membrane as a helical span at residues 176-196; that stretch reads SISMAFFAFLCLALSALVSGF. The Cytoplasmic portion of the chain corresponds to 197-204; it reads KLAKQTYI.

Belongs to the Casparian strip membrane proteins (CASP) family. As to quaternary structure, homodimer and heterodimers.

The protein resides in the cell membrane. The chain is CASP-like protein 4B4 from Oryza sativa subsp. japonica (Rice).